The primary structure comprises 394 residues: Elongation factor Tu (394 aa).

The 195-residue stretch at 10-204 (KEHANIGTIG…AVDDYIPTPE (195 aa)) folds into the tr-type G domain. Residues 19 to 26 (GHVDHGKT) are G1. 19–26 (GHVDHGKT) provides a ligand contact to GTP. Threonine 26 contacts Mg(2+). Positions 60–64 (GITIN) are G2. Residues 81-84 (DCPG) are G3. Residues 81–85 (DCPGH) and 136–139 (NKVD) each bind GTP. The G4 stretch occupies residues 136–139 (NKVD). A G5 region spans residues 174–176 (SAL).

It belongs to the TRAFAC class translation factor GTPase superfamily. Classic translation factor GTPase family. EF-Tu/EF-1A subfamily. In terms of assembly, monomer.

The protein localises to the cytoplasm. The enzyme catalyses GTP + H2O = GDP + phosphate + H(+). Functionally, GTP hydrolase that promotes the GTP-dependent binding of aminoacyl-tRNA to the A-site of ribosomes during protein biosynthesis. The polypeptide is Elongation factor Tu (Staphylococcus epidermidis (strain ATCC 35984 / DSM 28319 / BCRC 17069 / CCUG 31568 / BM 3577 / RP62A)).